The sequence spans 425 residues: Protein translocase subunit SecY (425 aa).

Helical transmembrane passes span 15-35, 62-82, 113-131, 139-159, 168-188, 201-221, 266-286, 304-324, 364-384, and 385-405; these read LLSL…VPGI, TVVV…SIIM, LLTL…FYLK, LVLA…VLWL, LGNG…PGFV, IGSW…IVLL, PIIL…LGLL, IIYW…YSTI, LLGA…QAIL, and SLSG…GVIL.

The protein belongs to the SecY/SEC61-alpha family. Component of the plastid Sec protein translocase complex, which is composed of at least SecY, SecE and SecG.

The protein localises to the plastid. Its subcellular location is the chloroplast thylakoid membrane. In terms of biological role, the central subunit of the protein translocation channel SecYE. Consists of two halves formed by TMs 1-5 and 6-10. These two domains form a lateral gate at the front which open onto the bilayer between TMs 2 and 7, and are clamped together by SecE at the back. The channel is closed by both a pore ring composed of hydrophobic SecY resides and a short helix (helix 2A) on the extracellular side of the membrane which forms a plug. This is Protein translocase subunit SecY from Trieres chinensis (Marine centric diatom).